Consider the following 2898-residue polypeptide: Papilin (2898 aa).

A signal peptide spans methionine 1 to serine 26. The interval leucine 43–serine 67 is disordered. The 55-residue stretch at proline 57 to proline 111 folds into the TSP type-1 1 domain. 3 disulfide bridges follow: cysteine 69–cysteine 105, cysteine 73–cysteine 110, and cysteine 84–cysteine 95. Asparagine 258 and asparagine 319 each carry an N-linked (GlcNAc...) asparagine glycan. The TSP type-1 2 domain maps to aspartate 338 to alanine 397. N-linked (GlcNAc...) asparagine glycosylation is present at asparagine 419. TSP type-1 domains are found at residues asparagine 461–glutamate 521, glycine 522–lysine 575, cysteine 576–glutamate 633, and cysteine 639–threonine 694. Disulfide bonds link cysteine 462-cysteine 504, cysteine 473-cysteine 515, and cysteine 477-cysteine 520. The N-linked (GlcNAc...) asparagine glycan is linked to asparagine 669. 2 disordered regions span residues leucine 699–serine 1252 and glycine 1323–lysine 1367. Acidic residues-rich tracts occupy residues isoleucine 708–isoleucine 720 and leucine 727–aspartate 738. Over residues serine 768–isoleucine 788 the composition is skewed to polar residues. The span at glutamate 801–serine 879 shows a compositional bias: low complexity. 5 N-linked (GlcNAc...) asparagine glycosylation sites follow: asparagine 889, asparagine 914, asparagine 917, asparagine 950, and asparagine 1064. The segment covering alanine 890 to glycine 1053 has biased composition (low complexity). Residues asparagine 1064–glycine 1073 show a composition bias toward polar residues. Low complexity-rich tracts occupy residues glutamate 1076–threonine 1091 and serine 1104–threonine 1215. Residues serine 1237–threonine 1248 show a composition bias toward basic residues. The segment covering proline 1330–glutamate 1351 has biased composition (low complexity). N-linked (GlcNAc...) asparagine glycosylation is found at asparagine 1489 and asparagine 1623. 15 disulfide bridges follow: cysteine 1612–cysteine 1662, cysteine 1621–cysteine 1645, cysteine 1637–cysteine 1658, cysteine 1671–cysteine 1721, cysteine 1680–cysteine 1704, cysteine 1696–cysteine 1717, cysteine 1730–cysteine 1780, cysteine 1739–cysteine 1763, cysteine 1755–cysteine 1776, cysteine 1790–cysteine 1840, cysteine 1799–cysteine 1823, cysteine 1815–cysteine 1836, cysteine 1849–cysteine 1899, cysteine 1858–cysteine 1882, and cysteine 1874–cysteine 1895. BPTI/Kunitz inhibitor domains follow at residues cysteine 1612 to cysteine 1662, cysteine 1671 to cysteine 1721, cysteine 1730 to cysteine 1780, cysteine 1790 to cysteine 1840, and cysteine 1849 to cysteine 1899. A glycan (N-linked (GlcNAc...) asparagine) is linked at asparagine 1750. Residues lysine 1902–proline 1928 are disordered. The span at proline 1905–proline 1916 shows a compositional bias: low complexity. 3 cysteine pairs are disulfide-bonded: cysteine 1922/cysteine 1972, cysteine 1931/cysteine 1955, and cysteine 1947/cysteine 1968. Positions cysteine 1922–cysteine 1972 constitute a BPTI/Kunitz inhibitor 6 domain. The tract at residues cysteine 1972–proline 2004 is disordered. Positions proline 1977–alanine 1995 are enriched in pro residues. Intrachain disulfides connect cysteine 2001–cysteine 2051, cysteine 2010–cysteine 2034, cysteine 2026–cysteine 2047, cysteine 2071–cysteine 2121, cysteine 2080–cysteine 2104, cysteine 2096–cysteine 2117, cysteine 2128–cysteine 2178, cysteine 2137–cysteine 2161, cysteine 2153–cysteine 2174, cysteine 2194–cysteine 2244, cysteine 2203–cysteine 2227, cysteine 2219–cysteine 2240, cysteine 2253–cysteine 2303, cysteine 2262–cysteine 2286, cysteine 2278–cysteine 2299, cysteine 2318–cysteine 2371, cysteine 2327–cysteine 2354, and cysteine 2346–cysteine 2367. BPTI/Kunitz inhibitor domains lie at cysteine 2001 to cysteine 2051, cysteine 2071 to cysteine 2121, cysteine 2128 to cysteine 2178, cysteine 2194 to cysteine 2244, cysteine 2253 to cysteine 2303, and cysteine 2318 to cysteine 2371. The N-linked (GlcNAc...) asparagine glycan is linked to asparagine 2020. Residue asparagine 2083 is glycosylated (N-linked (GlcNAc...) asparagine). N-linked (GlcNAc...) asparagine glycosylation is present at asparagine 2205. Residues aspartate 2452 to alanine 2498 enclose the WAP domain. Residues asparagine 2465, asparagine 2552, and asparagine 2625 are each glycosylated (N-linked (GlcNAc...) asparagine). 3 Ig-like C2-type domains span residues proline 2523–alanine 2607, proline 2617–serine 2697, and proline 2749–serine 2840. Cysteine 2543 and cysteine 2592 form a disulfide bridge. 2 disulfide bridges follow: cysteine 2640–cysteine 2687 and cysteine 2775–cysteine 2824. 2 N-linked (GlcNAc...) asparagine glycosylation sites follow: asparagine 2784 and asparagine 2838. Residues valine 2847 to glycine 2886 form the PLAC domain.

Belongs to the papilin family. As to quaternary structure, homooligomer; disulfide-linked. In terms of processing, N-glycosylated. Sulfated. During embryogenesis it first appears in the extracellular matrix during gastrulation and early mesoderm development at sites where basement membranes do not subsequently form. Later, migrating hemocytes prominently produce it together with other ECM components, in basement membranes that underlie epithelia and envelop muscles and emerging organs. At various life stages, it can be synthesized by other cells, such as those of the fat body, and it also occurs in a few, circumscribed regions of relatively amorphous ECM. Isoform E is specifically expressed in ECM of heart and proventriculus. Isoform C is a major component of transitory ECM deposit in the early embryo. Isoform F is a major component of the basement membrane during embryogenesis.

Its subcellular location is the secreted. It is found in the extracellular space. The protein resides in the extracellular matrix. The protein localises to the basement membrane. Functionally, essential extracellular matrix (ECM) protein that influences cell rearrangements. May act by modulating metalloproteinases action during organogenesis. Able to non-competitively inhibit procollagen N-proteinase, an ADAMTS metalloproteinase. The protein is Papilin (Ppn) of Drosophila melanogaster (Fruit fly).